The sequence spans 315 residues: Porphobilinogen deaminase (315 aa).

Cys242 bears the S-(dipyrrolylmethanemethyl)cysteine mark.

The protein belongs to the HMBS family. Monomer. Dipyrromethane is required as a cofactor.

It carries out the reaction 4 porphobilinogen + H2O = hydroxymethylbilane + 4 NH4(+). The protein operates within porphyrin-containing compound metabolism; protoporphyrin-IX biosynthesis; coproporphyrinogen-III from 5-aminolevulinate: step 2/4. In terms of biological role, tetrapolymerization of the monopyrrole PBG into the hydroxymethylbilane pre-uroporphyrinogen in several discrete steps. This Syntrophotalea carbinolica (strain DSM 2380 / NBRC 103641 / GraBd1) (Pelobacter carbinolicus) protein is Porphobilinogen deaminase.